The chain runs to 984 residues: Mast/stem cell growth factor receptor Kit (984 aa).

The first 21 residues, 1–21 (MEYHWILLCVSLCFTFHPGDT), serve as a signal peptide directing secretion. Over 22-514 (KPTITPAGTY…RTISHDLFSP (493 aa)) the chain is Extracellular. Ig-like C2-type domains follow at residues 23 to 97 (PTIT…ERAS), 98 to 197 (IYIY…LTVR), 203 to 300 (PPVI…VWLD), 311 to 395 (PVNN…ASVN), and 398 to 498 (FTIF…QAFT). 4 cysteine pairs are disulfide-bonded: C44-C87, C129-C178, C144-C175, and C226-C284. N227, N260, N314, N351, N395, N448, and N476 each carry an N-linked (GlcNAc...) asparagine glycan. A disulfide bridge connects residues C421 and C487. A helical membrane pass occupies residues 515–535 (LLIGSVSAACILCLILIVLFY). The Cytoplasmic segment spans residues 536-984 (KYMQKPKYQI…GTEPFRVQRV (449 aa)). Y558 is a binding site for Mg(2+). A phosphotyrosine; by autocatalysis mark is found at Y558 and Y560. The Protein kinase domain maps to 579–926 (LRFGKTLGSG…LSDTTKHIYL (348 aa)). Residues 586-593 (GSGAFGKV), K613, and 661-667 (EYCCFGD) contribute to the ATP site. Phosphotyrosine; by autocatalysis occurs at positions 690 and 707. Residues 711 to 723 (RPSAAGKPSSSSS) are compositionally biased toward low complexity. The tract at residues 711-749 (RPSAAGKPSSSSSSEKRRSLREGSPYVEEDSESEMFDED) is disordered. Positions 737 to 749 (VEEDSESEMFDED) are enriched in acidic residues. The active-site Proton acceptor is D781. R785 contacts ATP. 2 residues coordinate Mg(2+): N786 and D799. Phosphotyrosine; by autocatalysis occurs at positions 812 and 925. The interval 936 to 963 (PRGREESSTHSMASQPFNSAGNNSPPSR) is disordered. A compositionally biased stretch (polar residues) spans 944-960 (THSMASQPFNSAGNNSP).

Belongs to the protein kinase superfamily. Tyr protein kinase family. CSF-1/PDGF receptor subfamily. Post-translationally, ubiquitinated. Rapidly ubiquitinated after autophosphorylation induced by kitlg/scf binding, leading to internalization and degradation. In terms of processing, autophosphorylated on tyrosine residues. Phosphorylated tyrosine residues are important for interaction with specific binding partners.

The protein resides in the cell membrane. It catalyses the reaction L-tyrosyl-[protein] + ATP = O-phospho-L-tyrosyl-[protein] + ADP + H(+). In terms of biological role, tyrosine-protein kinase that acts as a cell-surface receptor for the cytokine kitlg/scf and plays an essential role in the regulation of cell survival and proliferation, hematopoiesis, stem cell maintenance, gametogenesis, mast cell development, migration and function, and in melanogenesis. The chain is Mast/stem cell growth factor receptor Kit (kit) from Takifugu rubripes (Japanese pufferfish).